The primary structure comprises 126 residues: Fluoride-specific ion channel FluC (126 aa).

4 consecutive transmembrane segments (helical) span residues 5–25 (LHFL…WLLG), 35–55 (WGTL…LGLI), 68–88 (ALVT…AEVV), and 99–119 (AAGY…LGLA). Na(+) is bound by residues G75 and T78.

The protein belongs to the fluoride channel Fluc/FEX (TC 1.A.43) family.

It is found in the cell inner membrane. It carries out the reaction fluoride(in) = fluoride(out). Na(+) is not transported, but it plays an essential structural role and its presence is essential for fluoride channel function. Its function is as follows. Fluoride-specific ion channel. Important for reducing fluoride concentration in the cell, thus reducing its toxicity. In Bordetella avium (strain 197N), this protein is Fluoride-specific ion channel FluC.